A 310-amino-acid polypeptide reads, in one-letter code: Carbamate kinase 1 (310 aa).

Belongs to the carbamate kinase family.

It is found in the cytoplasm. The enzyme catalyses hydrogencarbonate + NH4(+) + ATP = carbamoyl phosphate + ADP + H2O + H(+). It functions in the pathway metabolic intermediate metabolism; carbamoyl phosphate degradation; CO(2) and NH(3) from carbamoyl phosphate: step 1/1. This is Carbamate kinase 1 (arcC1) from Staphylococcus aureus (strain bovine RF122 / ET3-1).